Consider the following 311-residue polypeptide: Homeobox protein knotted-1-like 10 (311 aa).

2 disordered regions span residues 1 to 45 (MEDL…PATT) and 153 to 184 (LCGG…DAAD). Positions 12–22 (SRGGGGGGGGA) are enriched in gly residues. Positions 197-217 (ELKEMLLKKYSGCLSRLRSEF) constitute an ELK domain. A DNA-binding region (homeobox; TALE-type) is located at residues 218 to 281 (LKKRKKGKLP…NQRKRHWKPS (64 aa)).

Belongs to the TALE/KNOX homeobox family.

The protein localises to the nucleus. Its function is as follows. Probable transcription factor that may be involved in shoot formation during embryogenesis. The sequence is that of Homeobox protein knotted-1-like 10 (OSH71) from Oryza sativa subsp. indica (Rice).